We begin with the raw amino-acid sequence, 262 residues long: Acyl-[acyl-carrier-protein]--UDP-N-acetylglucosamine O-acyltransferase (262 aa).

The protein belongs to the transferase hexapeptide repeat family. LpxA subfamily. In terms of assembly, homotrimer.

The protein localises to the cytoplasm. It carries out the reaction a (3R)-hydroxyacyl-[ACP] + UDP-N-acetyl-alpha-D-glucosamine = a UDP-3-O-[(3R)-3-hydroxyacyl]-N-acetyl-alpha-D-glucosamine + holo-[ACP]. Its pathway is glycolipid biosynthesis; lipid IV(A) biosynthesis; lipid IV(A) from (3R)-3-hydroxytetradecanoyl-[acyl-carrier-protein] and UDP-N-acetyl-alpha-D-glucosamine: step 1/6. Functionally, involved in the biosynthesis of lipid A, a phosphorylated glycolipid that anchors the lipopolysaccharide to the outer membrane of the cell. This Salmonella arizonae (strain ATCC BAA-731 / CDC346-86 / RSK2980) protein is Acyl-[acyl-carrier-protein]--UDP-N-acetylglucosamine O-acyltransferase.